We begin with the raw amino-acid sequence, 454 residues long: Phosphoglucosamine mutase (454 aa).

Catalysis depends on Ser101, which acts as the Phosphoserine intermediate. Mg(2+) contacts are provided by Ser101, Asp243, Asp245, and Asp247. Ser101 bears the Phosphoserine mark.

Belongs to the phosphohexose mutase family. It depends on Mg(2+) as a cofactor. In terms of processing, activated by phosphorylation.

The catalysed reaction is alpha-D-glucosamine 1-phosphate = D-glucosamine 6-phosphate. Functionally, catalyzes the conversion of glucosamine-6-phosphate to glucosamine-1-phosphate. The chain is Phosphoglucosamine mutase from Citrifermentans bemidjiense (strain ATCC BAA-1014 / DSM 16622 / JCM 12645 / Bem) (Geobacter bemidjiensis).